Consider the following 239-residue polypeptide: Lactate utilization protein A 1 (239 aa).

Belongs to the LutA/YkgE family.

Its function is as follows. Is involved in L-lactate degradation and allows cells to grow with lactate as the sole carbon source. This Bacillus anthracis (strain A0248) protein is Lactate utilization protein A 1.